The chain runs to 69 residues: Conopeptide Y-Fe1 (69 aa).

Residues 1–20 (MSKLGVVLFVFLLLLPLAAP) form the signal peptide. Residues 21–69 (QPVGDQPADQPADRNAEARGTYLYPFSYYRLWRYFTRFLHKQPYYYVHI) constitute a propeptide that is removed on maturation.

Belongs to the conotoxin M superfamily. Conopeptide Y family. Expressed by the venom duct.

Its subcellular location is the secreted. Tyrosine-rich conopeptide that specifically targets voltage-gated potassium channel Kv1.6/KCNA6 (IC(50) is 8.8 uM) that is expressed in Xenopus oocytes. In vivo, causes seizures (at 5 nmol) and death (20 nmol) when intracranially injected into mice, and causes paralysis (at 10 pmol) to C.elegans. The sequence is that of Conopeptide Y-Fe1 from Conus ferrugineus (Cone snail).